The sequence spans 212 residues: MNSKFIVIEGLEGAGKTTARDTVVAVLRAQGINDIVFTREPGGTPLAEKLRDLIKQGIDGEVLTDKAEVLMLYAARVQLVENVIKPALARGSWVVGDRHDLSSQAYQGGGRGIDSQLMASLRDTVLGEFRPDLTLYLDLPPAVGLARARARGELDRIEQESLAFFERTRARYLELAASDASIKTIDASQPIEQVSASISQALAQWLTNQELV.

10-17 (GLEGAGKT) is an ATP binding site.

It belongs to the thymidylate kinase family.

The catalysed reaction is dTMP + ATP = dTDP + ADP. In terms of biological role, phosphorylation of dTMP to form dTDP in both de novo and salvage pathways of dTTP synthesis. In Yersinia pseudotuberculosis serotype O:1b (strain IP 31758), this protein is Thymidylate kinase.